The sequence spans 526 residues: GMP synthase [glutamine-hydrolyzing] (526 aa).

One can recognise a Glutamine amidotransferase type-1 domain in the interval 9–208 (RILILDFGSQ…LVNICGCKQL (200 aa)). The active-site Nucleophile is cysteine 86. Active-site residues include histidine 182 and glutamate 184. One can recognise a GMPS ATP-PPase domain in the interval 209-401 (WTPGRIIEDA…LGLPYDMVYR (193 aa)). Residue 236 to 242 (SGGVDSS) coordinates ATP.

Homodimer.

The enzyme catalyses XMP + L-glutamine + ATP + H2O = GMP + L-glutamate + AMP + diphosphate + 2 H(+). The protein operates within purine metabolism; GMP biosynthesis; GMP from XMP (L-Gln route): step 1/1. Functionally, catalyzes the synthesis of GMP from XMP. This chain is GMP synthase [glutamine-hydrolyzing], found in Hahella chejuensis (strain KCTC 2396).